Here is a 185-residue protein sequence, read N- to C-terminus: Ribosome-recycling factor (185 aa).

This sequence belongs to the RRF family.

The protein resides in the cytoplasm. In terms of biological role, responsible for the release of ribosomes from messenger RNA at the termination of protein biosynthesis. May increase the efficiency of translation by recycling ribosomes from one round of translation to another. The polypeptide is Ribosome-recycling factor (Aromatoleum aromaticum (strain DSM 19018 / LMG 30748 / EbN1) (Azoarcus sp. (strain EbN1))).